The primary structure comprises 640 residues: Translation factor GUF1, mitochondrial (640 aa).

A mitochondrion-targeting transit peptide spans 1-26 (MRRLRSLYLQSSICFRRFNHYSAKDT). The 185-residue stretch at 39 to 223 (ENYRNFSIVA…AIIDRIPPPT (185 aa)) folds into the tr-type G domain. GTP contacts are provided by residues 48–55 (AHVDHGKS), 115–119 (DTPGH), and 169–172 (NKID).

This sequence belongs to the TRAFAC class translation factor GTPase superfamily. Classic translation factor GTPase family. LepA subfamily.

The protein localises to the mitochondrion inner membrane. It carries out the reaction GTP + H2O = GDP + phosphate + H(+). Its function is as follows. Promotes mitochondrial protein synthesis. May act as a fidelity factor of the translation reaction, by catalyzing a one-codon backward translocation of tRNAs on improperly translocated ribosomes. Binds to mitochondrial ribosomes in a GTP-dependent manner. In Lachancea thermotolerans (strain ATCC 56472 / CBS 6340 / NRRL Y-8284) (Yeast), this protein is Translation factor GUF1, mitochondrial.